The sequence spans 49 residues: Large ribosomal subunit protein bL33A (49 aa).

Belongs to the bacterial ribosomal protein bL33 family.

The protein is Large ribosomal subunit protein bL33A of Staphylococcus saprophyticus subsp. saprophyticus (strain ATCC 15305 / DSM 20229 / NCIMB 8711 / NCTC 7292 / S-41).